The chain runs to 152 residues: Small ribosomal subunit protein uS15 (152 aa).

The segment covering Met-1–Lys-11 has biased composition (basic residues). The tract at residues Met-1–Pro-23 is disordered.

Belongs to the universal ribosomal protein uS15 family. In terms of assembly, part of the 30S ribosomal subunit.

This Methanosarcina acetivorans (strain ATCC 35395 / DSM 2834 / JCM 12185 / C2A) protein is Small ribosomal subunit protein uS15.